Consider the following 68-residue polypeptide: Conotoxin Cal14.13b (68 aa).

A signal peptide spans 1–20; it reads MKLCVVIVLLMLAMPFNGGE. The propeptide occupies 21 to 68; that stretch reads ASRFFNQHARSQRSGMKTRGIWCDPPCPEGETCRGGECSDEFNGDMGR. Met66 is modified (methionine amide).

Post-translationally, contains 2 disulfide bonds. As to expression, expressed by the venom duct.

It localises to the secreted. Probable neurotoxin with unknown target. Possibly targets ion channels. In Californiconus californicus (California cone), this protein is Conotoxin Cal14.13b.